Consider the following 330-residue polypeptide: Probable cytosolic iron-sulfur protein assembly protein ciao1-A (330 aa).

7 WD repeats span residues 14 to 53 (HPDS…WECK), 59 to 98 (GHQR…FECL), 103 to 142 (GHEN…EYEC), 148 to 187 (SHTQ…WECR), 192 to 231 (GHTS…GGQD), 243 to 282 (FHGR…DPDQ), and 294 to 330 (AHSQ…QSEV).

Belongs to the WD repeat CIA1 family. Component of the CIA complex.

Key component of the cytosolic iron-sulfur protein assembly (CIA) complex, a multiprotein complex that mediates the incorporation of iron-sulfur cluster into extramitochondrial Fe/S proteins. The chain is Probable cytosolic iron-sulfur protein assembly protein ciao1-A (ciao1a) from Salmo salar (Atlantic salmon).